A 176-amino-acid chain; its full sequence is Lipocalin-1 (176 aa).

Residues 1-19 (MMRALLLAIGLGLVAALQA) form the signal peptide. A disulfide bond links C80 and C171.

This sequence belongs to the calycin superfamily. Lipocalin family. As to quaternary structure, predominantly monomer. May form homodimer. Interacts with LMBR1L; this interaction mediates the endocytosis of LCN1.

It localises to the secreted. Could play a role in taste reception. Could be necessary for the concentration and delivery of sapid molecules in the gustatory system. Can bind various ligands, with chemical structures ranging from lipids and retinoids to the macrocyclic antibiotic rifampicin and even to microbial siderophores. Exhibits an extremely wide ligand pocket. The protein is Lipocalin-1 (LCN1) of Sus scrofa (Pig).